A 206-amino-acid chain; its full sequence is Small ribosomal subunit protein uS4 (206 aa).

The region spanning 96-156 (CRLDNVVYRM…EKSKNQLRIA (61 aa)) is the S4 RNA-binding domain.

This sequence belongs to the universal ribosomal protein uS4 family. Part of the 30S ribosomal subunit. Contacts protein S5. The interaction surface between S4 and S5 is involved in control of translational fidelity.

Functionally, one of the primary rRNA binding proteins, it binds directly to 16S rRNA where it nucleates assembly of the body of the 30S subunit. With S5 and S12 plays an important role in translational accuracy. This Pseudomonas aeruginosa (strain LESB58) protein is Small ribosomal subunit protein uS4.